Reading from the N-terminus, the 101-residue chain is Small ribosomal subunit protein bS18c (101 aa).

The segment covering 1–19 (MDKSKQPFRKSKRSFRRRL) has biased composition (basic residues). The disordered stretch occupies residues 1 to 26 (MDKSKQPFRKSKRSFRRRLPPIGSGD).

It belongs to the bacterial ribosomal protein bS18 family. As to quaternary structure, part of the 30S ribosomal subunit.

It localises to the plastid. The protein localises to the chloroplast. This is Small ribosomal subunit protein bS18c from Phalaenopsis aphrodite subsp. formosana (Moth orchid).